Reading from the N-terminus, the 252-residue chain is Imidazole glycerol phosphate synthase subunit HisF (252 aa).

Catalysis depends on residues Asp11 and Asp130.

It belongs to the HisA/HisF family. In terms of assembly, heterodimer of HisH and HisF.

It is found in the cytoplasm. It catalyses the reaction 5-[(5-phospho-1-deoxy-D-ribulos-1-ylimino)methylamino]-1-(5-phospho-beta-D-ribosyl)imidazole-4-carboxamide + L-glutamine = D-erythro-1-(imidazol-4-yl)glycerol 3-phosphate + 5-amino-1-(5-phospho-beta-D-ribosyl)imidazole-4-carboxamide + L-glutamate + H(+). It functions in the pathway amino-acid biosynthesis; L-histidine biosynthesis; L-histidine from 5-phospho-alpha-D-ribose 1-diphosphate: step 5/9. Functionally, IGPS catalyzes the conversion of PRFAR and glutamine to IGP, AICAR and glutamate. The HisF subunit catalyzes the cyclization activity that produces IGP and AICAR from PRFAR using the ammonia provided by the HisH subunit. The protein is Imidazole glycerol phosphate synthase subunit HisF of Bacillus pumilus (strain SAFR-032).